We begin with the raw amino-acid sequence, 146 residues long: UPF0735 ACT domain-containing protein CHY_1913 (146 aa).

In terms of domain architecture, ACT spans 70–145 (TLALNLEHRA…GVSKVELVGQ (76 aa)).

It belongs to the UPF0735 family.

The polypeptide is UPF0735 ACT domain-containing protein CHY_1913 (Carboxydothermus hydrogenoformans (strain ATCC BAA-161 / DSM 6008 / Z-2901)).